Consider the following 674-residue polypeptide: MATAVSRPCAGRSRDILWRVLGWRIVASIVWSVLFLPICTTVFIIFSRIDLFHPIQWLSDSFSDLYSSYVIFYFLLLSVVIIIISIFNVEFYAVVPSIPCSRLALIGKIIHPQQLMHSFIHAAMGMVMAWCAAVITQGQYSFLVVPCTGTNSFGSPAAQTCLNEYHLFFLLTGAFMGYSYSLLYFVNNMNYLPFPIIQQYKFLRFRRSLLLLVKHSCVESLFLVRNFCILYYFLGYIPKAWISTAMNLHIDEQVHRPLDTVSGLLNLSLLYHVWLCGVFLLTTWYVSWILFKIYATEAHVFPVQPPFAEGSDECLPKVLNSNPPPIIKYLALQDLMLLSQYSPSRRQEVFSLSQPGGHPHNWTAISRECLNLLNGMTQKLILYQEAAATNGRVSSSYPVEPKKLNSPEETAFQTPKSSQMPRPSVPPLVKTSLFSSKLSTPDVVSPFGTPFGSSVMNRMAGIFDVNTCYGSPQSPQLIRRGPRLWTSASDQQMTEFSNPSPSTSISAEGKTMRQPSVIYSWIQNKREQIKNFLSKRVLIMYFFSKHPEASIQAVFSDAQMHIWALEGLSHLVAASFTEDRFGVVQTTLPAILNTLLTLQEAVDKYFKLPHASSKPPRISGSLVDTSYKTLRFAFRASLKTAIYRITTTFGEHLNAVQASAEHQKRLQQFLEFKE.

The Cytoplasmic segment spans residues 1-24 (MATAVSRPCAGRSRDILWRVLGWR). The helical transmembrane segment at 25-45 (IVASIVWSVLFLPICTTVFII) threads the bilayer. Residues 46–68 (FSRIDLFHPIQWLSDSFSDLYSS) lie on the Perinuclear space side of the membrane. A helical membrane pass occupies residues 69-89 (YVIFYFLLLSVVIIIISIFNV). Residues 90–114 (EFYAVVPSIPCSRLALIGKIIHPQQ) are Cytoplasmic-facing. The helical transmembrane segment at 115 to 135 (LMHSFIHAAMGMVMAWCAAVI) threads the bilayer. Over 136–165 (TQGQYSFLVVPCTGTNSFGSPAAQTCLNEY) the chain is Perinuclear space. The helical transmembrane segment at 166-186 (HLFFLLTGAFMGYSYSLLYFV) threads the bilayer. Topologically, residues 187 to 225 (NNMNYLPFPIIQQYKFLRFRRSLLLLVKHSCVESLFLVR) are cytoplasmic. The helical transmembrane segment at 226–246 (NFCILYYFLGYIPKAWISTAM) threads the bilayer. At 247–272 (NLHIDEQVHRPLDTVSGLLNLSLLYH) the chain is on the perinuclear space side. The chain crosses the membrane as a helical span at residues 273 to 293 (VWLCGVFLLTTWYVSWILFKI). The Cytoplasmic portion of the chain corresponds to 294-674 (YATEAHVFPV…RLQQFLEFKE (381 aa)). Positions 394-425 (SSSYPVEPKKLNSPEETAFQTPKSSQMPRPSV) are disordered. Ser406 carries the phosphoserine modification. Residues 407–421 (PEETAFQTPKSSQMP) show a composition bias toward polar residues. Position 414 is a phosphothreonine (Thr414). The residue at position 439 (Ser439) is a Phosphoserine. Position 440 is a phosphothreonine (Thr440). Ser445 bears the Phosphoserine mark. Phosphothreonine is present on Thr449. A phosphoserine mark is found at Ser471 and Ser474.

Belongs to the NDC1 family. In terms of assembly, interacts with the NUP35/NUP53. Interacts with AAAS, anchoring it to the nuclear envelope.

The protein localises to the nucleus. The protein resides in the nuclear pore complex. It is found in the nucleus membrane. Component of the nuclear pore complex (NPC), which plays a key role in de novo assembly and insertion of NPC in the nuclear envelope. Required for NPC and nuclear envelope assembly, possibly by forming a link between the nuclear envelope membrane and soluble nucleoporins, thereby anchoring the NPC in the membrane. The polypeptide is Nucleoporin NDC1 (NDC1) (Homo sapiens (Human)).